A 162-amino-acid chain; its full sequence is Ribosome maturation factor RimP (162 aa).

This sequence belongs to the RimP family.

It is found in the cytoplasm. Functionally, required for maturation of 30S ribosomal subunits. The protein is Ribosome maturation factor RimP of Leptospira borgpetersenii serovar Hardjo-bovis (strain JB197).